The sequence spans 661 residues: Heme transporter BhuA (661 aa).

The first 23 residues, 1–23 (MKFTRTLVLVSTSLLATVATSQA), serve as a signal peptide directing secretion. Residues 48 to 159 (KDNIEATGGT…AAGAIRYETV (112 aa)) form the TBDR plug domain. Positions 170–661 (TFGARIIGSY…TFTFQTAFKF (492 aa)) constitute a TBDR beta-barrel domain.

This sequence belongs to the TonB-dependent receptor family.

The protein resides in the cell outer membrane. Its function is as follows. Heme transporter playing an important role in stationary-phase iron acquisition and required for maintenance of chronic infection in mice. The chain is Heme transporter BhuA (bhuA) from Brucella abortus (strain 2308).